The chain runs to 383 residues: Probable cell wall hydrolase LytN (383 aa).

Residues 1–49 form the signal peptide; it reads MFVYYCKECFIMNKQQSKVRYSIRKVSIGILSISIGMFLALGMSNKAYA. The 45-residue stretch at 175–219 folds into the LysM domain; the sequence is QIYTVKKGDTLSAIALKYKTTVSNIQNTNNIANPNLIFIGQKLKV. A Peptidase C51 domain is found at 241 to 378; it reads NSSTLNYLKT…NYENDMIFIR (138 aa).

The protein resides in the secreted. Probably involved in peptidoglycan hydrolysis. This is Probable cell wall hydrolase LytN (lytN) from Staphylococcus aureus (strain NCTC 8325 / PS 47).